A 128-amino-acid polypeptide reads, in one-letter code: NADH dehydrogenase [ubiquinone] 1 beta subcomplex subunit 6 (128 aa).

Ser2 carries the post-translational modification N-acetylserine. N6-acetyllysine is present on Lys24. A helical transmembrane segment spans residues 64–86 (AYRSSLFAVSHVLIPMWFVHYYV).

It belongs to the complex I NDUFB6 subunit family. In terms of assembly, complex I is composed of 45 different subunits.

It localises to the mitochondrion inner membrane. In terms of biological role, accessory subunit of the mitochondrial membrane respiratory chain NADH dehydrogenase (Complex I), that is believed not to be involved in catalysis. Complex I functions in the transfer of electrons from NADH to the respiratory chain. The immediate electron acceptor for the enzyme is believed to be ubiquinone. The polypeptide is NADH dehydrogenase [ubiquinone] 1 beta subcomplex subunit 6 (Ndufb6) (Mus musculus (Mouse)).